We begin with the raw amino-acid sequence, 201 residues long: Cell division protein SepF (201 aa).

The tract at residues 1-94 is disordered; that stretch reads MALKDLFSGF…TTSKNNARNV (94 aa). The span at 13 to 28 shows a compositional bias: acidic residues; the sequence is VEEEDDELEAPPEENE. Over residues 35–44 the composition is skewed to low complexity; the sequence is PKQQAQSQNQ. Residues 59-88 are compositionally biased toward polar residues; it reads SIQSVPKKQSTRLQQSSGERKYQMNNTTSK.

It belongs to the SepF family. As to quaternary structure, homodimer. Interacts with FtsZ.

It localises to the cytoplasm. Cell division protein that is part of the divisome complex and is recruited early to the Z-ring. Probably stimulates Z-ring formation, perhaps through the cross-linking of FtsZ protofilaments. Its function overlaps with FtsA. In Staphylococcus saprophyticus subsp. saprophyticus (strain ATCC 15305 / DSM 20229 / NCIMB 8711 / NCTC 7292 / S-41), this protein is Cell division protein SepF.